Here is a 398-residue protein sequence, read N- to C-terminus: MMKPEFSHFFGFCVYFLFLQVMASSEKLRVTTPTRHLLARVGGQAELSCQVIPPHSVMHMEVRWFRSGHSQPVYLYRGGHKMSEEAAPEYANRTEFVKEAIGEGKVSLRIYNINILDDGPYQCSFNDSGFIDVAIMNLNVTAVGLETEIHVQAPDADGVMVECNTGGWFPRPQMEWRDSKGATLPHSLKSYSQDEARFFHMKMTLLLTNMSHGSIICCISNPVTGEEKQTSIILANELFNQDYLWVGIFPFSVLSLILFGVLPFINSFFRSQGCASGCLSKCLPVVTSWPVQIVHFLVCSGVLFAVYLPHRYRVSLSDPQFPLYNNWITELLIVILFLTICFVLPITVLLLIKLSPTCLAKWEKNKDDIMDSQLGLGKAREASTLYEEQSRKSWEQEK.

The first 25 residues, 1–25 (MMKPEFSHFFGFCVYFLFLQVMASS), serve as a signal peptide directing secretion. An Ig-like V-type domain is found at 26–141 (EKLRVTTPTR…DVAIMNLNVT (116 aa)). The Extracellular segment spans residues 26 to 244 (EKLRVTTPTR…ANELFNQDYL (219 aa)). Cys-49 and Cys-123 are disulfide-bonded. N-linked (GlcNAc...) asparagine glycosylation is found at Asn-92 and Asn-139. An Ig-like C1-type domain is found at 142–233 (AVGLETEIHV…TGEEKQTSII (92 aa)). An intrachain disulfide couples Cys-163 to Cys-217. The helical transmembrane segment at 245 to 265 (WVGIFPFSVLSLILFGVLPFI) threads the bilayer. Residues 266 to 288 (NSFFRSQGCASGCLSKCLPVVTS) lie on the Cytoplasmic side of the membrane. Residues 289-309 (WPVQIVHFLVCSGVLFAVYLP) traverse the membrane as a helical segment. At 310–331 (HRYRVSLSDPQFPLYNNWITEL) the chain is on the extracellular side. Residues 332 to 352 (LIVILFLTICFVLPITVLLLI) form a helical membrane-spanning segment. The Cytoplasmic portion of the chain corresponds to 353-398 (KLSPTCLAKWEKNKDDIMDSQLGLGKAREASTLYEEQSRKSWEQEK).

This sequence belongs to the SKINT family. In terms of tissue distribution, expressed in skin, thymus, testis and, to a lower extent, bladder, brain, heart, kidney, mammary gland, small intestine and uterus.

The protein resides in the membrane. May act by engaging a cell surface molecule on immature T-cells in the embryonic thymus. This Mus musculus (Mouse) protein is Selection and upkeep of intraepithelial T-cells protein 8 (Skint8).